The sequence spans 226 residues: Large ribosomal subunit protein uL1 (226 aa).

The protein belongs to the universal ribosomal protein uL1 family. Part of the 50S ribosomal subunit.

In terms of biological role, binds directly to 23S rRNA. The L1 stalk is quite mobile in the ribosome, and is involved in E site tRNA release. Protein L1 is also a translational repressor protein, it controls the translation of the L11 operon by binding to its mRNA. This is Large ribosomal subunit protein uL1 from Mycoplasmoides gallisepticum (strain R(low / passage 15 / clone 2)) (Mycoplasma gallisepticum).